The primary structure comprises 344 residues: Probable dual-specificity RNA methyltransferase RlmN (344 aa).

The active-site Proton acceptor is the Glu92. A Radical SAM core domain is found at 98-325 (DEDRATLCVS…TTIRASRGED (228 aa)). The cysteines at positions 105 and 330 are disulfide-linked. Residues Cys112, Cys116, and Cys119 each contribute to the [4Fe-4S] cluster site. S-adenosyl-L-methionine is bound by residues 157-158 (GE), Ser189, 211-213 (SLH), and His287. Cys330 acts as the S-methylcysteine intermediate in catalysis.

It belongs to the radical SAM superfamily. RlmN family. Requires [4Fe-4S] cluster as cofactor.

Its subcellular location is the cytoplasm. The catalysed reaction is adenosine(2503) in 23S rRNA + 2 reduced [2Fe-2S]-[ferredoxin] + 2 S-adenosyl-L-methionine = 2-methyladenosine(2503) in 23S rRNA + 5'-deoxyadenosine + L-methionine + 2 oxidized [2Fe-2S]-[ferredoxin] + S-adenosyl-L-homocysteine. It carries out the reaction adenosine(37) in tRNA + 2 reduced [2Fe-2S]-[ferredoxin] + 2 S-adenosyl-L-methionine = 2-methyladenosine(37) in tRNA + 5'-deoxyadenosine + L-methionine + 2 oxidized [2Fe-2S]-[ferredoxin] + S-adenosyl-L-homocysteine. Specifically methylates position 2 of adenine 2503 in 23S rRNA and position 2 of adenine 37 in tRNAs. The sequence is that of Probable dual-specificity RNA methyltransferase RlmN from Bacteroides fragilis (strain YCH46).